A 672-amino-acid chain; its full sequence is Acetyl-coenzyme A synthetase (672 aa).

CoA is bound by residues 205-208 and Thr325; that span reads RGGK. ATP-binding positions include 401-403, 425-430, Asp516, and Arg531; these read GEP and DTYWQT. Ser539 lines the CoA pocket. Residue Arg542 coordinates ATP. Residue Arg600 participates in CoA binding.

It belongs to the ATP-dependent AMP-binding enzyme family.

The catalysed reaction is acetate + ATP + CoA = acetyl-CoA + AMP + diphosphate. In Phycomyces blakesleeanus (strain ATCC 8743b / DSM 1359 / FGSC 10004 / NBRC 33097 / NRRL 1555), this protein is Acetyl-coenzyme A synthetase (facA).